The chain runs to 469 residues: Ribulose bisphosphate carboxylase large chain (469 aa).

Lys-8 is subject to N6,N6,N6-trimethyllysine. The substrate site is built by Asn-117 and Thr-167. Lys-169 acts as the Proton acceptor in catalysis. Lys-171 lines the substrate pocket. Mg(2+) contacts are provided by Lys-195, Asp-197, and Glu-198. An N6-carboxylysine modification is found at Lys-195. His-288 acts as the Proton acceptor in catalysis. Substrate is bound by residues Arg-289, His-321, and Ser-373.

Belongs to the RuBisCO large chain family. Type I subfamily. Heterohexadecamer of 8 large chains and 8 small chains; disulfide-linked. The disulfide link is formed within the large subunit homodimers. Mg(2+) serves as cofactor. The disulfide bond which can form in the large chain dimeric partners within the hexadecamer appears to be associated with oxidative stress and protein turnover.

The protein localises to the plastid. Its subcellular location is the chloroplast. It carries out the reaction 2 (2R)-3-phosphoglycerate + 2 H(+) = D-ribulose 1,5-bisphosphate + CO2 + H2O. It catalyses the reaction D-ribulose 1,5-bisphosphate + O2 = 2-phosphoglycolate + (2R)-3-phosphoglycerate + 2 H(+). In terms of biological role, ruBisCO catalyzes two reactions: the carboxylation of D-ribulose 1,5-bisphosphate, the primary event in carbon dioxide fixation, as well as the oxidative fragmentation of the pentose substrate in the photorespiration process. Both reactions occur simultaneously and in competition at the same active site. This Persicaria senticosa (Knotweed) protein is Ribulose bisphosphate carboxylase large chain.